A 221-amino-acid polypeptide reads, in one-letter code: Octanoyltransferase (221 aa).

The 186-residue stretch at Gly-31 to Pro-216 folds into the BPL/LPL catalytic domain. Residues Arg-76–His-83, Ala-145–Gly-147, and Gly-159–Ala-161 each bind substrate. Cys-177 acts as the Acyl-thioester intermediate in catalysis.

Belongs to the LipB family.

It localises to the cytoplasm. The enzyme catalyses octanoyl-[ACP] + L-lysyl-[protein] = N(6)-octanoyl-L-lysyl-[protein] + holo-[ACP] + H(+). The protein operates within protein modification; protein lipoylation via endogenous pathway; protein N(6)-(lipoyl)lysine from octanoyl-[acyl-carrier-protein]: step 1/2. Catalyzes the transfer of endogenously produced octanoic acid from octanoyl-acyl-carrier-protein onto the lipoyl domains of lipoate-dependent enzymes. Lipoyl-ACP can also act as a substrate although octanoyl-ACP is likely to be the physiological substrate. This chain is Octanoyltransferase, found in Chloroflexus aggregans (strain MD-66 / DSM 9485).